The primary structure comprises 509 residues: Putative ATP-dependent RNA helicase QP509L (509 aa).

The region spanning 110–262 (KKLLSPYGRF…KIIIHHLGQP (153 aa)) is the Helicase ATP-binding domain. 123–130 (LNTGLGKT) lines the ATP pocket. The DEAH box signature appears at 215-218 (DEAH).

This sequence belongs to the DEAD box helicase family. DEAH subfamily.

The catalysed reaction is ATP + H2O = ADP + phosphate + H(+). The sequence is that of Putative ATP-dependent RNA helicase QP509L from African swine fever virus (strain Badajoz 1971 Vero-adapted) (Ba71V).